A 357-amino-acid polypeptide reads, in one-letter code: Protein RecA (357 aa).

67–74 contributes to the ATP binding site; it reads GPESSGKT. The tract at residues 335–357 is disordered; that stretch reads LASSASDDESTEGNIDLETGEIF.

This sequence belongs to the RecA family.

It is found in the cytoplasm. Can catalyze the hydrolysis of ATP in the presence of single-stranded DNA, the ATP-dependent uptake of single-stranded DNA by duplex DNA, and the ATP-dependent hybridization of homologous single-stranded DNAs. It interacts with LexA causing its activation and leading to its autocatalytic cleavage. This Shewanella putrefaciens (strain CN-32 / ATCC BAA-453) protein is Protein RecA.